Reading from the N-terminus, the 344-residue chain is Hyoscyamine 6-dioxygenase (344 aa).

The Fe2OG dioxygenase domain occupies 193-293 (QIQMMLTNYY…RVSIATLIGP (101 aa)). Residues H217, D219, and H274 each coordinate Fe cation. 2-oxoglutarate is bound at residue R284.

It belongs to the iron/ascorbate-dependent oxidoreductase family. Monomer. Fe(2+) is required as a cofactor. It depends on L-ascorbate as a cofactor. In terms of processing, the N-terminus is blocked. In terms of tissue distribution, root.

The enzyme catalyses L-hyoscyamine + 2-oxoglutarate + O2 = (6S)-6-hydroxyhyoscyamine + succinate + CO2. It functions in the pathway alkaloid biosynthesis; scopolamine biosynthesis. The protein is Hyoscyamine 6-dioxygenase (H6H) of Hyoscyamus niger (Black henbane).